The sequence spans 756 residues: Membrane-anchored protein 1 (756 aa).

Positions Met1–Gly24 are cleaved as a signal peptide. Asn52 and Asn64 each carry an N-linked (GlcNAc...) asparagine glycan. 3 helical membrane passes run Ile91 to Val111, Ile120 to Leu140, and Gln148 to Leu168. The N-linked (GlcNAc...) asparagine glycan is linked to Asn190. Positions Tyr281–Arg328 are disordered. The span at Ser289–Ser300 shows a compositional bias: low complexity. N-linked (GlcNAc...) asparagine glycosylation is found at Asn396 and Asn407. Positions Glu427 to Lys453 are disordered. The span at Met433–Pro447 shows a compositional bias: polar residues. Position 438 is a phosphoserine (Ser438). N-linked (GlcNAc...) asparagine glycans are attached at residues Asn459, Asn470, Asn471, Asn496, Asn497, Asn521, Asn522, Asn547, Asn548, Asn573, Asn574, Asn594, Asn598, Asn599, Asn618, Asn623, Asn649, Asn664, Asn676, and Asn685. The disordered stretch occupies residues Met482–Asn650. Residues Asn485–Arg520 are compositionally biased toward low complexity. Polar residues-rich tracts occupy residues Arg593 to Asn605, Arg617 to Phe629, and Gly640 to Asn650. Residues Gly686 to Thr697 are compositionally biased toward polar residues. A disordered region spans residues Gly686–Pro713. An N-linked (GlcNAc...) asparagine glycan is attached at Asn715. Residues Phe735–Arg756 are disordered.

This sequence to yeast YOL019W and YMR063W.

The protein resides in the cell membrane. Its subcellular location is the cell tip. Its function is as follows. Required for correct cell separation at high temperatures. The chain is Membrane-anchored protein 1 (mac1) from Schizosaccharomyces pombe (strain 972 / ATCC 24843) (Fission yeast).